We begin with the raw amino-acid sequence, 94 residues long: RING finger protein Z (94 aa).

Residues 1-19 (MGNCNGASKSNQPDSSRVT) show a composition bias toward polar residues. A disordered region spans residues 1 to 20 (MGNCNGASKSNQPDSSRVTQ). G2 is lipidated: N-myristoyl glycine; by host. The RING-type; atypical zinc-finger motif lies at 39–75 (CKCCWFADTNLITCNDHYLCLRCHQVMLRNSDLCNIC). Residues 89-92 (PTAP) carry the PTAP/PSAP motif motif.

Belongs to the arenaviridae Z protein family. Interacts with protein NP; this interaction probably directs the encapsidated genome to budding sites. Interacts (via RING domain) with polymerase L; this interaction inhibits viral transcription and replication, Z partially blocks the product exit tunnel for the releasing nascent RNA product. Interacts with the glycoprotein complex; this interaction plays a role in virion budding. Interacts with host eIF4E; this interaction results in eIF4E reduced affinity for its substrate, the 5'-m7 G cap structure. Interacts (via late-budding domain) with host TSG101; this interaction is essential for budding and release of viral particles. Interacts with host RPLP0; this interaction may serve to load ribosome-like particles inside the virion. Interacts with host PML; this interaction induces PML bodies redistribution in the cytoplasm upon viral infection. Myristoylation is required for the role of RING finger protein Z in assembly and budding.

It is found in the virion. The protein localises to the host cytoplasm. Its subcellular location is the host perinuclear region. The protein resides in the host cell membrane. Plays a crucial role in virion assembly and budding. Expressed late in the virus life cycle, it acts as an inhibitor of viral transcription and RNA synthesis by interacting with the viral polymerase L. Presumably recruits the NP encapsidated genome to cellular membranes at budding sites via direct interaction with NP. Plays critical roles in the final steps of viral release by interacting with host TSG101, a member of the vacuolar protein-sorting pathway and using other cellular host proteins involved in vesicle formation pathway. The budding of the virus progeny occurs after association of protein Z with the viral glycoprotein complex SSP-GP1-GP2 at the cell periphery, step that requires myristoylation of protein Z. Also selectively represses protein production by associating with host eIF4E. In cell-based minigenome assay, has an inhibitory effect on the ribonucleoprotein machinery (vRNP), which is responsible for the replication and transcription of the viral genome. The polypeptide is RING finger protein Z (Akodon azarae (Azara's grass mouse)).